A 35-amino-acid chain; its full sequence is Photosystem II reaction center protein T (35 aa).

The chain crosses the membrane as a helical span at residues 3–23 (ALVYTFLLVSTLGIIFFAIFF).

Belongs to the PsbT family. As to quaternary structure, PSII is composed of 1 copy each of membrane proteins PsbA, PsbB, PsbC, PsbD, PsbE, PsbF, PsbH, PsbI, PsbJ, PsbK, PsbL, PsbM, PsbT, PsbY, PsbZ, Psb30/Ycf12, at least 3 peripheral proteins of the oxygen-evolving complex and a large number of cofactors. It forms dimeric complexes.

It is found in the plastid. Its subcellular location is the chloroplast thylakoid membrane. In terms of biological role, found at the monomer-monomer interface of the photosystem II (PS II) dimer, plays a role in assembly and dimerization of PSII. PSII is a light-driven water plastoquinone oxidoreductase, using light energy to abstract electrons from H(2)O, generating a proton gradient subsequently used for ATP formation. The polypeptide is Photosystem II reaction center protein T (Ceratophyllum demersum (Rigid hornwort)).